The sequence spans 224 residues: 7-cyano-7-deazaguanine synthase (224 aa).

Residue 14-24 (FSGGQDSTTCL) participates in ATP binding. Residues Cys190, Cys198, Cys201, and Cys204 each contribute to the Zn(2+) site.

Belongs to the QueC family. Requires Zn(2+) as cofactor.

It carries out the reaction 7-carboxy-7-deazaguanine + NH4(+) + ATP = 7-cyano-7-deazaguanine + ADP + phosphate + H2O + H(+). It functions in the pathway purine metabolism; 7-cyano-7-deazaguanine biosynthesis. Catalyzes the ATP-dependent conversion of 7-carboxy-7-deazaguanine (CDG) to 7-cyano-7-deazaguanine (preQ(0)). The sequence is that of 7-cyano-7-deazaguanine synthase from Haemophilus ducreyi (strain 35000HP / ATCC 700724).